Consider the following 350-residue polypeptide: MSHQTGIQASEDVKEIFARARNGKYRLLKISIENEQLVIGSYSQPSDSWDKDYDSFVLPLLEDKQPCYILFRLDSQNAQGYEWIFIAWSPDHSHVRQKMLYAATRATLKKEFGGGHIKDEVFGTVKEDVSLHGYKKYLLSQSSPAPLTAAEEELRQIKINEVQTDVGVDTKHQTLQGVAFPISREAFQALEKLNNRQLNYVQLEIDIKNEIIILANTTNTELKDLPKRIPKDSARYHFFLYKHSHEGDYLESIVFIYSMPGYTCSIRERMLYSSCKSRLLEIVERQLQMDVIRKIEIDNGDELTADFLYEEVHPKQHAHKQSFAKPKGPAGKRGIRRLIRGPAETEATTD.

N-acetylserine is present on Ser-2. In terms of domain architecture, ADF-H 1 spans 2–139; it reads SHQTGIQASE…SLHGYKKYLL (138 aa). A phosphoserine mark is found at Ser-143 and Ser-277. One can recognise an ADF-H 2 domain in the interval 175–313; that stretch reads LQGVAFPISR…TADFLYEEVH (139 aa). Tyr-309 is subject to Phosphotyrosine. The interval 316–350 is disordered; it reads QHAHKQSFAKPKGPAGKRGIRRLIRGPAETEATTD. The residue at position 349 (Thr-349) is a Phosphothreonine.

This sequence belongs to the actin-binding proteins ADF family. Twinfilin subfamily. As to quaternary structure, interacts with G-actin; ADP-actin form and capping protein (CP). May also be able to interact with TWF2 and phosphoinositides, PI(4,5)P2. When bound to PI(4,5)P2, it is down-regulated. Interacts with ACTG1. Post-translationally, phosphorylated on serine and threonine residues. In terms of tissue distribution, expressed at high levels in the colon, testis, ovary, prostate and lung. Expressed at lower levels in the brain, bladder and heart. Not detected in liver.

The protein localises to the cytoplasm. It localises to the cytoskeleton. Actin-binding protein involved in motile and morphological processes. Inhibits actin polymerization, likely by sequestering G-actin. By capping the barbed ends of filaments, it also regulates motility. Seems to play an important role in clathrin-mediated endocytosis and distribution of endocytic organelles. The sequence is that of Twinfilin-1 (TWF1) from Homo sapiens (Human).